We begin with the raw amino-acid sequence, 698 residues long: Transcription factor cwo (698 aa).

The interval 62-75 (QDPLSHRIIEKRRR) is basic motif; degenerate. The 56-residue stretch at 62–117 (QDPLSHRIIEKRRRDRMNSCLADLSRLIPPQYQRKGRGRIEKTEIIEMAIRHLKHL) folds into the bHLH domain. The interval 76 to 117 (DRMNSCLADLSRLIPPQYQRKGRGRIEKTEIIEMAIRHLKHL) is helix-loop-helix motif. The Orange domain maps to 128 to 159 (YRSGYMDCMKEAAKFLYDVHMQDFCHRLLGRL). Disordered stretches follow at residues 257–319 (SSPA…ASST) and 349–369 (STAP…FESS). Over residues 280 to 318 (APPAADNVPSNSTGSGSAAACAGGNSNSSGSNSSNAASS) the composition is skewed to low complexity. The span at 359 to 369 (TDSSHHDFESS) shows a compositional bias: basic and acidic residues.

Expressed in adult brain where it is detected in the dorsal lateral neurons, small and large ventral lateral neurons and dorsal neurons 1, 2 and 3 (at protein level). Expressed at constant levels in a 12 hour light / 12 hour day cycle (at protein level). Strongly expressed in pacemaker neurons. In adults, mRNA expression oscillates in a circadian manner with a peak at around 14 hour Zeitgeber time. mRNA levels oscillate in a rhythmic manner in both 12 hour light / 12 hour dark and constant dark conditions with a morning peak around the time of lights-on and an evening peak around the time of lights-off in light/dark conditions. During stage 8 of embryonic development, expressed in the anterior and posterior midgut primordia and expression in the gut continues throughout embryonic development. During germ band retraction, expression is initiated in many tissues in a prominent segmentally repeated pattern. Later, expression is ubiquitous but has higher levels in segmentally repeated clusters of cells. Expression is also found in cells of the amnioserosa, in the head region, in posterior spiracles and in tracheal trees.

The protein resides in the nucleus. Its function is as follows. Plays a role in the regulation of circadian rhythms. Transcriptional repressor which inhibits Clock-mediated transcriptional activation by binding to E boxes in the promoters of Clock target genes and repressing their transcription. E box binding activity is time-dependent with higher binding activity seen in the early morning (zeitgeber time 2) than early evening (zeitgeber time 14) and is dependent on the presence of the circadian protein per. It is likely that per binds to Clock-cycle heterodimers, reducing their affinity for E box binding and allowing cwo to bind instead. Negatively regulates its own expression. This chain is Transcription factor cwo, found in Drosophila melanogaster (Fruit fly).